The following is a 369-amino-acid chain: Deoxyhypusine synthase (369 aa).

NAD(+) contacts are provided by residues 105–109 (SNLIS), 131–133 (TAG), glutamate 137, and aspartate 238. Residue 136–137 (EE) participates in spermidine binding. Residue aspartate 243 coordinates spermidine. Glycine 283 is a binding site for NAD(+). A spermidine-binding site is contributed by histidine 288. 308–309 (TA) contacts NAD(+). Residues 314-316 (GSD) and 323-329 (EAVSWGK) each bind spermidine. The active-site Nucleophile is lysine 329. NAD(+) is bound at residue 342–343 (DA).

The protein belongs to the deoxyhypusine synthase family. It depends on NAD(+) as a cofactor.

The enzyme catalyses [eIF5A protein]-L-lysine + spermidine = [eIF5A protein]-deoxyhypusine + propane-1,3-diamine. Its pathway is protein modification; eIF5A hypusination. Its function is as follows. Catalyzes the NAD-dependent oxidative cleavage of spermidine and the subsequent transfer of the butylamine moiety of spermidine to the epsilon-amino group of a critical lysine residue of the eIF-5A precursor protein to form the intermediate deoxyhypusine residue. This is the first step of the post-translational modification of that lysine into an unusual amino acid residue named hypusine. Hypusination is unique to mature eIF-5A factor and is essential for its function. The polypeptide is Deoxyhypusine synthase (Dhps) (Rattus norvegicus (Rat)).